The sequence spans 338 residues: 1-aminocyclopropane-1-carboxylate deaminase (338 aa).

K51 bears the N6-(pyridoxal phosphate)lysine mark. Catalysis depends on S78, which acts as the Nucleophile.

Belongs to the ACC deaminase/D-cysteine desulfhydrase family. Homotrimer. Requires pyridoxal 5'-phosphate as cofactor.

The catalysed reaction is 1-aminocyclopropane-1-carboxylate + H2O = 2-oxobutanoate + NH4(+). Its function is as follows. Catalyzes a cyclopropane ring-opening reaction, the irreversible conversion of 1-aminocyclopropane-1-carboxylate (ACC) to ammonia and alpha-ketobutyrate. Allows growth on ACC as a nitrogen source. This is 1-aminocyclopropane-1-carboxylate deaminase from Burkholderia ambifaria (strain MC40-6).